The chain runs to 569 residues: Peroxynitrite isomerase THAP4 (569 aa).

The THAP-type zinc finger occupies 1–85; it reads MVICCAAVNC…LKPTAVPSIF (85 aa). The tract at residues 83–219 is disordered; sequence SIFHLSEKKR…GISMDDFTPP (137 aa). The span at 121–130 shows a compositional bias: polar residues; it reads IGSSLSSSDN. Position 159 is a phosphoserine (Ser159). Residues 196–210 show a composition bias toward low complexity; sequence ASSSAADAGGADKSG. Residues 230–233 carry the HCFC1-binding motif (HBM) motif; it reads LHSY. Position 234 is a phosphoserine (Ser234). Positions 235-312 are disordered; that stretch reads FSSKHTRERP…EAVQSEHSDA (78 aa). The segment covering 242–262 has biased composition (basic and acidic residues); that stretch reads ERPSVPREPMDRKRLKRDIEP. Residues 265–279 show a composition bias toward polar residues; that stretch reads SGNSVAQSPPSSSLT. Low complexity predominate over residues 280 to 289; that stretch reads ATPQKASQSP. Positions 407–569 are nitrobindin; that stretch reads PPKLNPVVEP…LHITYKKVTP (163 aa). Heme b-binding residues include Thr436 and His559.

The protein in the C-terminal section; belongs to the nitrobindin family. As to quaternary structure, homodimer. The cofactor is heme b.

It is found in the cytoplasm. It localises to the nucleus. It carries out the reaction peroxynitrite = nitrate. Its pathway is nitrogen metabolism. Functionally, heme-binding protein able to scavenge peroxynitrite and to protect free L-tyrosine against peroxynitrite-mediated nitration, by acting as a peroxynitrite isomerase that converts peroxynitrite to nitrate. Therefore, this protein likely plays a role in peroxynitrite sensing and in the detoxification of reactive nitrogen and oxygen species (RNS and ROS, respectively). Is able to bind nitric oxide (NO) in vitro, but may act as a sensor of peroxynitrite levels in vivo, possibly modulating the transcriptional activity residing in the N-terminal region. In Rattus norvegicus (Rat), this protein is Peroxynitrite isomerase THAP4.